A 206-amino-acid chain; its full sequence is Large ribosomal subunit protein uL4 (206 aa).

It belongs to the universal ribosomal protein uL4 family. In terms of assembly, part of the 50S ribosomal subunit.

Its function is as follows. One of the primary rRNA binding proteins, this protein initially binds near the 5'-end of the 23S rRNA. It is important during the early stages of 50S assembly. It makes multiple contacts with different domains of the 23S rRNA in the assembled 50S subunit and ribosome. Forms part of the polypeptide exit tunnel. The protein is Large ribosomal subunit protein uL4 of Paracoccus denitrificans (strain Pd 1222).